The sequence spans 183 residues: ATP synthase subunit delta (183 aa).

Belongs to the ATPase delta chain family. As to quaternary structure, F-type ATPases have 2 components, F(1) - the catalytic core - and F(0) - the membrane proton channel. F(1) has five subunits: alpha(3), beta(3), gamma(1), delta(1), epsilon(1). F(0) has three main subunits: a(1), b(2) and c(10-14). The alpha and beta chains form an alternating ring which encloses part of the gamma chain. F(1) is attached to F(0) by a central stalk formed by the gamma and epsilon chains, while a peripheral stalk is formed by the delta and b chains.

The protein localises to the cell membrane. In terms of biological role, f(1)F(0) ATP synthase produces ATP from ADP in the presence of a proton or sodium gradient. F-type ATPases consist of two structural domains, F(1) containing the extramembraneous catalytic core and F(0) containing the membrane proton channel, linked together by a central stalk and a peripheral stalk. During catalysis, ATP synthesis in the catalytic domain of F(1) is coupled via a rotary mechanism of the central stalk subunits to proton translocation. This protein is part of the stalk that links CF(0) to CF(1). It either transmits conformational changes from CF(0) to CF(1) or is implicated in proton conduction. The protein is ATP synthase subunit delta of Oenococcus oeni (strain ATCC BAA-331 / PSU-1).